The chain runs to 291 residues: 4-hydroxy-tetrahydrodipicolinate synthase (291 aa).

T47 contributes to the pyruvate binding site. Y136 serves as the catalytic Proton donor/acceptor. K164 acts as the Schiff-base intermediate with substrate in catalysis. A pyruvate-binding site is contributed by I206.

Belongs to the DapA family. Homotetramer; dimer of dimers.

It is found in the cytoplasm. The enzyme catalyses L-aspartate 4-semialdehyde + pyruvate = (2S,4S)-4-hydroxy-2,3,4,5-tetrahydrodipicolinate + H2O + H(+). Its pathway is amino-acid biosynthesis; L-lysine biosynthesis via DAP pathway; (S)-tetrahydrodipicolinate from L-aspartate: step 3/4. Catalyzes the condensation of (S)-aspartate-beta-semialdehyde [(S)-ASA] and pyruvate to 4-hydroxy-tetrahydrodipicolinate (HTPA). In Leuconostoc citreum (strain KM20), this protein is 4-hydroxy-tetrahydrodipicolinate synthase.